We begin with the raw amino-acid sequence, 390 residues long: Zinc finger protein 121 (390 aa).

A C2H2-type 1; degenerate zinc finger spans residues 88 to 110; it reads FEYSDCEEAFVDQSHLQANRITH. A C2H2-type 2; degenerate zinc finger spans residues 116–138; sequence YEQKQCGRAFTYSTSHAVSVKMH. C2H2-type zinc fingers lie at residues 144 to 166, 172 to 194, 200 to 222, 228 to 250, 256 to 278, 284 to 306, 312 to 334, 340 to 362, and 368 to 390; these read YECK…MRTH, YECK…VRIH, YQCK…VRIH, YECN…FKTH, FECK…FRIH, YKCK…VKIH, YECK…IRTH, YICK…VRIH, and YICN…LKTH.

It belongs to the krueppel C2H2-type zinc-finger protein family.

The protein resides in the nucleus. Its function is as follows. May be involved in transcriptional regulation. This is Zinc finger protein 121 (ZNF121) from Homo sapiens (Human).